The chain runs to 82 residues: Cortexin-1 (82 aa).

The disordered stretch occupies residues 1–20; it reads MSAPWTLSPEPLPPSTGPPV. The helical transmembrane segment at 30–50 threads the bilayer; that stretch reads TVFAFVLCLLVVLVLLMVRCV.

Belongs to the cortexin family. As to expression, neuron specific.

It localises to the membrane. In terms of biological role, may mediate extracellular or intracellular signaling of cortical neurons during forebrain development. This Rattus norvegicus (Rat) protein is Cortexin-1 (Ctxn1).